Consider the following 351-residue polypeptide: Rab9 effector protein with kelch motifs (351 aa).

6 Kelch repeats span residues 54-102, 105-156, 162-210, 214-263, 264-313, and 328-351; these read KIVI…PESE, SLWV…TNSA, LFVF…VITA, DIYI…TFNK, NIFI…LLPW, and LCFV…TVLT.

Its function is as follows. Rab9 effector required for endosome to trans-Golgi network (TGN) transport. The chain is Rab9 effector protein with kelch motifs (rabepk) from Danio rerio (Zebrafish).